The primary structure comprises 501 residues: Lysine--tRNA ligase (501 aa).

Mg(2+) contacts are provided by Glu-404 and Glu-411.

This sequence belongs to the class-II aminoacyl-tRNA synthetase family. As to quaternary structure, homodimer. Requires Mg(2+) as cofactor.

Its subcellular location is the cytoplasm. It catalyses the reaction tRNA(Lys) + L-lysine + ATP = L-lysyl-tRNA(Lys) + AMP + diphosphate. In Campylobacter jejuni subsp. jejuni serotype O:6 (strain 81116 / NCTC 11828), this protein is Lysine--tRNA ligase.